The chain runs to 148 residues: Deoxyuridine 5'-triphosphate nucleotidohydrolase (148 aa).

Substrate contacts are provided by residues 67 to 69, N80, 84 to 86, and M94; these read RSG and LID.

Belongs to the dUTPase family. It depends on Mg(2+) as a cofactor.

The enzyme catalyses dUTP + H2O = dUMP + diphosphate + H(+). The protein operates within pyrimidine metabolism; dUMP biosynthesis; dUMP from dCTP (dUTP route): step 2/2. Its function is as follows. This enzyme is involved in nucleotide metabolism: it produces dUMP, the immediate precursor of thymidine nucleotides and it decreases the intracellular concentration of dUTP so that uracil cannot be incorporated into DNA. The chain is Deoxyuridine 5'-triphosphate nucleotidohydrolase from Burkholderia cenocepacia (strain ATCC BAA-245 / DSM 16553 / LMG 16656 / NCTC 13227 / J2315 / CF5610) (Burkholderia cepacia (strain J2315)).